A 102-amino-acid polypeptide reads, in one-letter code: Large ribosomal subunit protein bL21 (102 aa).

It belongs to the bacterial ribosomal protein bL21 family. As to quaternary structure, part of the 50S ribosomal subunit. Contacts protein L20.

This protein binds to 23S rRNA in the presence of protein L20. This is Large ribosomal subunit protein bL21 from Zymomonas mobilis subsp. mobilis (strain ATCC 31821 / ZM4 / CP4).